The chain runs to 251 residues: Flap endonuclease Xni (251 aa).

D104 contributes to the Mg(2+) binding site. Residues 160–249 (VQPQQLPDYW…IDGNLQQLRL (90 aa)) enclose the 5'-3' exonuclease domain. The K(+) site is built by L171, A172, P180, V182, and I185. Residues 184 to 189 (GIGPKS) form an interaction with DNA region.

Belongs to the Xni family. The cofactor is Mg(2+). It depends on K(+) as a cofactor.

Functionally, has flap endonuclease activity. During DNA replication, flap endonucleases cleave the 5'-overhanging flap structure that is generated by displacement synthesis when DNA polymerase encounters the 5'-end of a downstream Okazaki fragment. In Escherichia coli O81 (strain ED1a), this protein is Flap endonuclease Xni.